Consider the following 146-residue polypeptide: Putative pre-16S rRNA nuclease (146 aa).

Belongs to the YqgF nuclease family.

It localises to the cytoplasm. In terms of biological role, could be a nuclease involved in processing of the 5'-end of pre-16S rRNA. In Mycoplasmopsis pulmonis (strain UAB CTIP) (Mycoplasma pulmonis), this protein is Putative pre-16S rRNA nuclease.